A 376-amino-acid chain; its full sequence is Actin-like protein 53D (376 aa).

The tract at residues 1–40 (MSSEVDSNSHHAAVVIDNGSGVCKAGFSPEDTPRAVFPSI) is necessary and sufficient for recruitment to the fusome and actin cones of spermatocyte cysts.

This sequence belongs to the actin family. ARP1 subfamily. As to expression, high expression in males whereas expression in females is very low. In adult males, highest levels of expression are in the testis. In adult females, expressed only in the ovaries at very low levels. In larvae, highly expressed in the imaginal disk whereas in prepupae and pupae modest levels of expression occur in the fat body.

It is found in the cytoplasm. The protein localises to the cytoskeleton. In terms of biological role, required for optimal embryo development, particularly under heat stress conditions. Also appears to have a role in negatively regulating spermatocyte cyst development. Under heat stress conditions, required for the correct organization and migration of nuclei during early embryogenesis, and therefore possibly functions by regulating embryonic actin networks during the heat stress response. This Drosophila melanogaster (Fruit fly) protein is Actin-like protein 53D.